The following is a 306-amino-acid chain: HTH-type transcriptional regulator AlkR (306 aa).

Residues 207-305 enclose the HTH araC/xylS-type domain; that stretch reads SNALAAIHAY…EQSPKHYRQQ (99 aa). 2 consecutive DNA-binding regions (H-T-H motif) follow at residues 224–245 and 272–295; these read ESLADQCCMSRSKFATLFQSIV and IQQIANKVGYSSETAFSQAFKRQF.

The protein operates within hydrocarbon metabolism; alkane degradation. Functionally, this protein activates the expression of the alkane 1-monooxygenase AlkM. The sequence is that of HTH-type transcriptional regulator AlkR (alkR) from Acinetobacter baylyi (strain ATCC 33305 / BD413 / ADP1).